A 376-amino-acid polypeptide reads, in one-letter code: Chorismate synthase ARO2 (376 aa).

N-acetylserine is present on serine 2. Residue histidine 17 is part of the active site. A disordered region spans residues isoleucine 39 to aspartate 61. Residues histidine 104 and aspartate 339 contribute to the active site.

Belongs to the chorismate synthase family. Homotetramer.

It catalyses the reaction 5-O-(1-carboxyvinyl)-3-phosphoshikimate = chorismate + phosphate. The catalysed reaction is FMNH2 + NADP(+) = FMN + NADPH + 2 H(+). It participates in metabolic intermediate biosynthesis; chorismate biosynthesis; chorismate from D-erythrose 4-phosphate and phosphoenolpyruvate: step 7/7. Functionally, bifunctional chorismate synthase and flavin reductase that catalyzes the conversion of 5-enolpyruvylshikimate 3-phosphate (EPSP) to form chorismate, which is the last common intermediate in the synthesis of the three aromatic amino acids phenylalanine, tyrosine and tryptophan. Also acts as a flavin reductase (FR) able to generate reduced flavin mononucleotide in the presence of NADPH. In Saccharomyces cerevisiae (strain ATCC 204508 / S288c) (Baker's yeast), this protein is Chorismate synthase ARO2.